A 678-amino-acid polypeptide reads, in one-letter code: MINKGKSWRLATVAAALMMAGSAWATEYSASFKNADIEEFINTVGKNLSKTIIIEPSVRGKINVRSYDLLNEEQYYQFFLSVLDVYGFAVVPMDNGVLKVVRSKDAKTSAIPVVDETNPGIGDEMVTRVVPVRNVSVRELAPLLRQLNDNAGGGNVVHYDPSNVLLITGRAAVVNRLVEVVRRVDKAGDQEVDIIKLRYASAGEMVRLVTNLNKDGNTQGGNTSLLLAPKVVADERTNSVVVSGEPKARARIIQMVRQLDRDLQSQGNTRVFYLKYGKAKDMVEVLKGVSTSIEADKKGGGTTAGGGNASIGGGKLAISADETTNALVITAQPDVMAELEQVVAKLDIRRAQVLVEAIIVEIADGDGLNLGVQWANTNGGGTQFTDTNLPIGSVAIAAKDYNENGTTTGLADLAKGFNGMAAGFYHGNWAALVTALSTSTKSDILSTPSIVTMDNKEASFNVGQEVPVQSGSQSSTTSDQVFNTIERKTVGTKLTVTPQINEGDSVLLNIEQEVSSVAQKQATGTADLGPTFDTRTIKNAVLVKSGETVVLGGLMDEQTQEKVSKVPLLGDIPVLGYLFRSTNNTTSKRNLMVFIRPTILRDAHVYSGISSNKYTMFRAEQLDAAAQESYLTSPKRQVLPEYGQDVAQSPEVQKQIELMKARQQATADGAQPFVQGNK.

An N-terminal signal peptide occupies residues Met-1–Ala-25. The segment at Thr-26–Gly-122 is N0. The N1 stretch occupies residues Glu-124–Gly-188. The tract at residues Asp-189–Gln-264 is N2. Positions Gly-267–Asp-347 are N3. Residues Gln-352–Asp-602 are secretin. The tract at residues His-604–Lys-678 is s domain.

This sequence belongs to the bacterial secretin family. GSP D subfamily. In terms of assembly, forms a cylindrical channel with 15 subunits.

It is found in the cell outer membrane. Functionally, involved in a type II secretion system (T2SS, formerly general secretion pathway, GSP) for the export of proteins. This subunit forms the outer membrane channel. This is Secretin ExeD (exeD) from Aeromonas salmonicida.